We begin with the raw amino-acid sequence, 340 residues long: Leucine-rich repeat-containing protein 23 (340 aa).

A compositionally biased stretch (acidic residues) spans 1–27 (MSDEDDVDDVDAEQDEVESDKEIEEWE). Residues 1–38 (MSDEDDVDDVDAEQDEVESDKEIEEWEDYRKETEEASE) form a disordered region. 6 LRR repeats span residues 89–110 (HLRY…NSLT), 111–134 (HLLW…PYLQ), 177–197 (SLHT…IYLP), 198–219 (KLKN…ENLS), 220–241 (NLTT…SQEM), and 243–264 (SLQY…AKLR). Residues 205–340 (AQNLLKKVEG…QDMEPYLPPV (136 aa)) are interaction with RSPH9. One can recognise an LRRCT domain in the interval 277–315 (NPCADETDYRQEALVQMAHLERLDKEFYEDDDRAEAEEI). The stretch at 305–328 (EDDDRAEAEEIRQRLKEEQDQDLD) forms a coiled coil. The disordered stretch occupies residues 317–340 (QRLKEEQDQDLDPDQDMEPYLPPV). The segment covering 323–333 (QDQDLDPDQDM) has biased composition (acidic residues).

Component of the axonemal radial spoke complex. Interacts with RSPH3A and RSPH3B. Interacts with RSPH9. Expressed in the testis (at protein level).

Its subcellular location is the cytoplasm. It is found in the cytoskeleton. The protein resides in the flagellum axoneme. Its function is as follows. Essential for sperm motility and male fertility. Plays an important role in the proper assembly of the third radial spoke (RS3) head and the bridge structure between RS2 and RS3 in the sperm flagella. The chain is Leucine-rich repeat-containing protein 23 (Lrrc23) from Mus musculus (Mouse).